A 34-amino-acid chain; its full sequence is Cytochrome c oxidase polypeptide 2A (34 aa).

Position 1 is an N-formylmethionine (Met1). The chain crosses the membrane as a helical span at residues 4–34; sequence KPKGALAVILVLTLTILVFWLGVYAVFFARG.

The protein resides in the cell membrane. The catalysed reaction is 4 Fe(II)-[cytochrome c] + O2 + 8 H(+)(in) = 4 Fe(III)-[cytochrome c] + 2 H2O + 4 H(+)(out). The protein is Cytochrome c oxidase polypeptide 2A (cbaD) of Thermus thermophilus (strain ATCC 27634 / DSM 579 / HB8).